Consider the following 393-residue polypeptide: Riboflavin biosynthesis protein RibBA (393 aa).

Residues 1–200 (MQLDSIDTAL…IEDLEKYRKS (200 aa)) are DHBP synthase. D-ribulose 5-phosphate-binding positions include 27 to 28 (RE), Asp-32, 139 to 143 (RRGHT), and Glu-163. Mg(2+) is bound at residue Glu-28. His-142 serves as a coordination point for Mg(2+). The segment at 201-393 (SISKLDAKAK…TKKEKMGHLI (193 aa)) is GTP cyclohydrolase II. 249 to 253 (RIHSA) lines the GTP pocket. Residues Cys-254, Cys-265, and Cys-267 each coordinate Zn(2+). GTP contacts are provided by residues Gln-270, 291–293 (EGR), and Thr-313. Catalysis depends on Asp-325, which acts as the Proton acceptor; for GTP cyclohydrolase activity. Arg-327 functions as the Nucleophile; for GTP cyclohydrolase activity in the catalytic mechanism. 2 residues coordinate GTP: Ser-348 and Lys-353.

It in the N-terminal section; belongs to the DHBP synthase family. The protein in the C-terminal section; belongs to the GTP cyclohydrolase II family. Requires Mg(2+) as cofactor. The cofactor is Mn(2+). Zn(2+) serves as cofactor.

The catalysed reaction is D-ribulose 5-phosphate = (2S)-2-hydroxy-3-oxobutyl phosphate + formate + H(+). The enzyme catalyses GTP + 4 H2O = 2,5-diamino-6-hydroxy-4-(5-phosphoribosylamino)-pyrimidine + formate + 2 phosphate + 3 H(+). It participates in cofactor biosynthesis; riboflavin biosynthesis; 2-hydroxy-3-oxobutyl phosphate from D-ribulose 5-phosphate: step 1/1. Its pathway is cofactor biosynthesis; riboflavin biosynthesis; 5-amino-6-(D-ribitylamino)uracil from GTP: step 1/4. In terms of biological role, catalyzes the conversion of D-ribulose 5-phosphate to formate and 3,4-dihydroxy-2-butanone 4-phosphate. Functionally, catalyzes the conversion of GTP to 2,5-diamino-6-ribosylamino-4(3H)-pyrimidinone 5'-phosphate (DARP), formate and pyrophosphate. The sequence is that of Riboflavin biosynthesis protein RibBA from Staphylococcus saprophyticus subsp. saprophyticus (strain ATCC 15305 / DSM 20229 / NCIMB 8711 / NCTC 7292 / S-41).